A 356-amino-acid chain; its full sequence is Protein U8 (356 aa).

It belongs to the herpesviridae US22 family.

In Homo sapiens (Human), this protein is Protein U8 (U8).